A 197-amino-acid chain; its full sequence is Phospholipid hydroperoxide glutathione peroxidase (197 aa).

At S40 the chain carries Phosphoserine. Residue U73 is part of the active site. Residue U73 is a non-standard amino acid, selenocysteine.

It belongs to the glutathione peroxidase family. As to quaternary structure, monomer. Has a tendency to form higher mass oligomers. Interacts with FUNDC1; this interaction promotes GPX4 recruitment into mitochondria through TOM/TIM complex where it is degraded by mitophagy. As to expression, expressed very intensively in the testis and weakly in lung, heart, and cerebellum.

Its subcellular location is the mitochondrion. The protein resides in the cytoplasm. The catalysed reaction is a hydroperoxy polyunsaturated fatty acid + 2 glutathione = a hydroxy polyunsaturated fatty acid + glutathione disulfide + H2O. It carries out the reaction 2 glutathione + H2O2 = glutathione disulfide + 2 H2O. It catalyses the reaction tert-butyl hydroperoxide + 2 glutathione = tert-butanol + glutathione disulfide + H2O. The enzyme catalyses cumene hydroperoxide + 2 glutathione = 2-phenylpropan-2-ol + glutathione disulfide + H2O. The catalysed reaction is (9S)-hydroperoxy-(10E,12Z)-octadecadienoate + 2 glutathione = (9S)-hydroxy-(10E,12Z)-octadecadienoate + glutathione disulfide + H2O. It carries out the reaction (13S)-hydroperoxy-(9Z,11E)-octadecadienoate + 2 glutathione = (13S)-hydroxy-(9Z,11E)-octadecadienoate + glutathione disulfide + H2O. It catalyses the reaction (5S)-hydroperoxy-(6E,8Z,11Z,14Z)-eicosatetraenoate + 2 glutathione = (5S)-hydroxy-(6E,8Z,11Z,14Z)-eicosatetraenoate + glutathione disulfide + H2O. The enzyme catalyses (12R)-hydroperoxy-(5Z,8Z,10E,14Z)-eicosatetraenoate + 2 glutathione = (12R)-hydroxy-(5Z,8Z,10E,14Z)-eicosatetraenoate + glutathione disulfide + H2O. The catalysed reaction is (12S)-hydroperoxy-(5Z,8Z,10E,14Z)-eicosatetraenoate + 2 glutathione = (12S)-hydroxy-(5Z,8Z,10E,14Z)-eicosatetraenoate + glutathione disulfide + H2O. It carries out the reaction (15S)-hydroperoxy-(5Z,8Z,11Z,13E)-eicosatetraenoate + 2 glutathione = (15S)-hydroxy-(5Z,8Z,11Z,13E)-eicosatetraenoate + glutathione disulfide + H2O. It catalyses the reaction (5S)-hydroperoxy-(6E,8Z,11Z,14Z,17Z)-eicosapentaenoate + 2 glutathione = (5S)-hydroxy-(6E,8Z,11Z,14Z,17Z)-eicosapentaenoate + glutathione disulfide + H2O. The enzyme catalyses (12S)-hydroperoxy-(5Z,8Z,10E,14Z,17Z)-eicosapentaenoate + 2 glutathione = (12S)-hydroxy-(5Z,8Z,10E,14Z,17Z)-eicosapentaenoate + glutathione disulfide + H2O. The catalysed reaction is (15S)-hydroperoxy-(5Z,8Z,11Z,13E,17Z)-eicosapentaenoate + 2 glutathione = (15S)-hydroxy-(5Z,8Z,11Z,13E,17Z)-eicosapentaenoate + glutathione disulfide + H2O. It carries out the reaction (15S)-hydroperoxy-(11Z,13E)-eicosadienoate + 2 glutathione = (15S)-hydroxy-(11Z,13E)-eicosadienoate + glutathione disulfide + H2O. It catalyses the reaction (17S)-hydroperoxy-(4Z,7Z,10Z,13Z,15E,19Z)-docosahexaenoate + 2 glutathione = (17S)-hydroxy-(4Z,7Z,10Z,13Z,15E,19Z)-docosahexaenoate + glutathione disulfide + H2O. The enzyme catalyses a hydroperoxy-1,2-diacyl-glycero-3-phosphocholine + 2 glutathione = a hydroxy-1,2-diacyl-glycero-3-phosphocholine + glutathione disulfide + H2O. Essential antioxidant peroxidase that directly reduces phospholipid hydroperoxide even if they are incorporated in membranes and lipoproteins. Can also reduce fatty acid hydroperoxide, cholesterol hydroperoxide and thymine hydroperoxide. Plays a key role in protecting cells from oxidative damage by preventing membrane lipid peroxidation. Required to prevent cells from ferroptosis, a non-apoptotic cell death resulting from an iron-dependent accumulation of lipid reactive oxygen species. The presence of selenocysteine (Sec) versus Cys at the active site is essential for life: it provides resistance to overoxidation and prevents cells against ferroptosis. The presence of Sec at the active site is also essential for the survival of a specific type of parvalbumin-positive interneurons, thereby preventing against fatal epileptic seizures. May be required to protect cells from the toxicity of ingested lipid hydroperoxides. Required for normal sperm development and male fertility. Essential for maturation and survival of photoreceptor cells. Plays a role in a primary T-cell response to viral and parasitic infection by protecting T-cells from ferroptosis and by supporting T-cell expansion. Plays a role of glutathione peroxidase in platelets in the arachidonic acid metabolism. Reduces hydroperoxy ester lipids formed by a 15-lipoxygenase that may play a role as down-regulator of the cellular 15-lipoxygenase pathway. Can also reduce small soluble hydroperoxides such as H2O2, cumene hydroperoxide and tert-butyl hydroperoxide. The chain is Phospholipid hydroperoxide glutathione peroxidase from Macaca fuscata fuscata (Japanese macaque).